A 322-amino-acid polypeptide reads, in one-letter code: Lipoyl synthase (322 aa).

Polar residues predominate over residues 1–12; that stretch reads MVTVLNTVNQSG. The segment at 1–22 is disordered; sequence MVTVLNTVNQSGRLRHPEKAHR. The [4Fe-4S] cluster site is built by Cys-60, Cys-65, Cys-71, Cys-86, Cys-90, Cys-93, and Ser-299. Positions 72–288 constitute a Radical SAM core domain; sequence WEKKHATFMI…ETIGKTKGFL (217 aa).

This sequence belongs to the radical SAM superfamily. Lipoyl synthase family. It depends on [4Fe-4S] cluster as a cofactor.

The protein localises to the cytoplasm. The catalysed reaction is [[Fe-S] cluster scaffold protein carrying a second [4Fe-4S](2+) cluster] + N(6)-octanoyl-L-lysyl-[protein] + 2 oxidized [2Fe-2S]-[ferredoxin] + 2 S-adenosyl-L-methionine + 4 H(+) = [[Fe-S] cluster scaffold protein] + N(6)-[(R)-dihydrolipoyl]-L-lysyl-[protein] + 4 Fe(3+) + 2 hydrogen sulfide + 2 5'-deoxyadenosine + 2 L-methionine + 2 reduced [2Fe-2S]-[ferredoxin]. The protein operates within protein modification; protein lipoylation via endogenous pathway; protein N(6)-(lipoyl)lysine from octanoyl-[acyl-carrier-protein]: step 2/2. In terms of biological role, catalyzes the radical-mediated insertion of two sulfur atoms into the C-6 and C-8 positions of the octanoyl moiety bound to the lipoyl domains of lipoate-dependent enzymes, thereby converting the octanoylated domains into lipoylated derivatives. The chain is Lipoyl synthase from Brucella abortus (strain S19).